The following is a 622-amino-acid chain: Basic helix-loop-helix ARNT-like protein 2 (622 aa).

Residues 1–10 show a composition bias toward low complexity; it reads MAEAGVGSAE. Disordered regions lie at residues 1 to 29 and 41 to 86; these read MAEAGVGSAEGAEEERRAVEENFPVDGNS and PITK…EDEE. Residues 45–54 are compositionally biased toward polar residues; the sequence is PATTSFNNSV. The segment covering 67–76 has biased composition (acidic residues); that stretch reads DNQDTVEVDG. The span at 77 to 86 shows a compositional bias: basic and acidic residues; it reads DPQKRNEDEE. One can recognise a bHLH domain in the interval 92–145; that stretch reads DFREAHSQTEKRRRDKMNNLIEELSAMIPQCNPMARKLDKLTVLRMAVQHLKSL. PAS domains follow at residues 163-235 and 342-412; these read KDDE…DVSP and VPQK…LQNK. A PAC domain is found at 417-460; that stretch reads TNSYKFRAKDGSFITLKSQWFSFMNPWTKELEYIVSNNTVVLGH.

Component of the circadian core oscillator, which includes the CRY proteins, CLOCK, or NPAS2, BMAL1 or BMAL2, CSNK1D and/or CSNK1E, TIMELESS and the PER proteins. Interacts directly with CLOCK to form the BMAL2-CLOCK transactivator. Can form heterodimers or homodimers which interact directly with CLOCK to form the transcription activator. Expressed in the pineal gland.

It is found in the nucleus. In terms of biological role, transcriptional activator which forms a core component of the circadian clock. The circadian clock, an internal time-keeping system, regulates various physiological processes through the generation of approximately 24 hour circadian rhythms in gene expression, which are translated into rhythms in metabolism and behavior. It is derived from the Latin roots 'circa' (about) and 'diem' (day) and acts as an important regulator of a wide array of physiological functions including metabolism, sleep, body temperature, blood pressure, endocrine, immune, cardiovascular, and renal function. Consists of two major components: the central clock, residing in the suprachiasmatic nucleus (SCN) of the brain, and the peripheral clocks that are present in nearly every tissue and organ system. Both the central and peripheral clocks can be reset by environmental cues, also known as Zeitgebers (German for 'timegivers'). The predominant Zeitgeber for the central clock is light, which is sensed by retina and signals directly to the SCN. The central clock entrains the peripheral clocks through neuronal and hormonal signals, body temperature and feeding-related cues, aligning all clocks with the external light/dark cycle. Circadian rhythms allow an organism to achieve temporal homeostasis with its environment at the molecular level by regulating gene expression to create a peak of protein expression once every 24 hours to control when a particular physiological process is most active with respect to the solar day. Transcription and translation of core clock components (CLOCK, NPAS2, BMAL1, BMAL2, PER1, PER2, PER3, CRY1 and CRY2) plays a critical role in rhythm generation, whereas delays imposed by post-translational modifications (PTMs) are important for determining the period (tau) of the rhythms (tau refers to the period of a rhythm and is the length, in time, of one complete cycle). A diurnal rhythm is synchronized with the day/night cycle, while the ultradian and infradian rhythms have a period shorter and longer than 24 hours, respectively. Disruptions in the circadian rhythms contribute to the pathology of cardiovascular diseases, cancer, metabolic syndromes and aging. A transcription/translation feedback loop (TTFL) forms the core of the molecular circadian clock mechanism. Transcription factors, CLOCK or NPAS2 and BMAL1 or BMAL2, form the positive limb of the feedback loop, act in the form of a heterodimer and activate the transcription of core clock genes and clock-controlled genes (involved in key metabolic processes), harboring E-box elements (5'-CACGTG-3') within their promoters. The core clock genes: PER1/2/3 and CRY1/2 which are transcriptional repressors form the negative limb of the feedback loop and interact with the CLOCK|NPAS2-BMAL1|BMAL2 heterodimer inhibiting its activity and thereby negatively regulating their own expression. This heterodimer also activates nuclear receptors NR1D1/2 and RORA/B/G, which form a second feedback loop and which activate and repress BMAL1 transcription, respectively. The preferred binding motif for the CLOCK-BMAL1 heterodimer is 5'-CACGTGA-3', which contains a flanking adenine nucleotide at the 3-prime end of the canonical 6-nucleotide E-box sequence. CLOCK specifically binds to the half-site 5'-CAC-3', while BMAL1 binds to the half-site 5'-GTGA-3'. This is Basic helix-loop-helix ARNT-like protein 2 (BMAL2) from Gallus gallus (Chicken).